The chain runs to 241 residues: Chloride intracellular channel protein 1 (241 aa).

N-acetylalanine is present on A2. The required for insertion into the membrane stretch occupies residues 2-90 (AEEQPQVELF…EEFLEAVLCP (89 aa)). Residue K13 is modified to N6-acetyllysine. The G-site motif lies at 24-27 (CPFS). Cysteines 24 and 59 form a disulfide. A helical membrane pass occupies residues 26–46 (FSQRLFMVLWLKGVTFNVTTV). The GST C-terminal domain maps to 93–233 (YPKLAALNPE…PDDEEIELAY (141 aa)). The residue at position 119 (K119) is an N6-acetyllysine. Position 121 is a phosphoserine (S121). K131 carries the post-translational modification N6-acetyllysine. Residues S156 and S211 each carry the phosphoserine modification. A Phosphotyrosine modification is found at Y233.

It belongs to the chloride channel CLIC family. In terms of assembly, monomer. Homodimer (in vitro). Interacts with TRAPPC2. Dimerization requires a conformation change that leads to the exposure of a large hydrophobic surface. In vivo, this may lead to membrane insertion.

It localises to the nucleus. Its subcellular location is the nucleus membrane. It is found in the cytoplasm. The protein localises to the cell membrane. The protein resides in the endoplasmic reticulum. It carries out the reaction L-dehydroascorbate + 2 glutathione = glutathione disulfide + L-ascorbate. It catalyses the reaction chloride(in) = chloride(out). The enzyme catalyses iodide(out) = iodide(in). The catalysed reaction is thiocyanate(in) = thiocyanate(out). It carries out the reaction nitrate(in) = nitrate(out). It catalyses the reaction bromide(in) = bromide(out). The enzyme catalyses fluoride(in) = fluoride(out). Functionally, in the soluble state, catalyzes glutaredoxin-like thiol disulfide exchange reactions with reduced glutathione as electron donor. Reduces selenite and dehydroascorbate and may act as an antioxidant during oxidative stress response. Can insert into membranes and form voltage-dependent multi-ion conductive channels. Membrane insertion seems to be redox-regulated and may occur only under oxidizing conditions. Involved in regulation of the cell cycle. This Oryctolagus cuniculus (Rabbit) protein is Chloride intracellular channel protein 1 (CLIC1).